The following is a 183-amino-acid chain: Large ribosomal subunit protein uL5 (183 aa).

Belongs to the universal ribosomal protein uL5 family. As to quaternary structure, part of the 50S ribosomal subunit; contacts the 5S rRNA and probably tRNA. Forms a bridge to the 30S subunit in the 70S ribosome.

Its function is as follows. This is one of the proteins that bind and probably mediate the attachment of the 5S RNA into the large ribosomal subunit, where it forms part of the central protuberance. In the 70S ribosome it contacts protein S13 of the 30S subunit (bridge B1b), connecting the 2 subunits; this bridge is implicated in subunit movement. May contact the P site tRNA; the 5S rRNA and some of its associated proteins might help stabilize positioning of ribosome-bound tRNAs. The polypeptide is Large ribosomal subunit protein uL5 (Thermococcus kodakarensis (strain ATCC BAA-918 / JCM 12380 / KOD1) (Pyrococcus kodakaraensis (strain KOD1))).